Consider the following 619-residue polypeptide: Dihydroxy-acid dehydratase (619 aa).

Position 81 (Asp-81) interacts with Mg(2+). Cys-122 is a [2Fe-2S] cluster binding site. The Mg(2+) site is built by Asp-123 and Lys-124. An N6-carboxylysine modification is found at Lys-124. Cys-195 is a binding site for [2Fe-2S] cluster. Position 494 (Glu-494) interacts with Mg(2+). The Proton acceptor role is filled by Ser-520.

This sequence belongs to the IlvD/Edd family. Homodimer. [2Fe-2S] cluster serves as cofactor. It depends on Mg(2+) as a cofactor.

The catalysed reaction is (2R)-2,3-dihydroxy-3-methylbutanoate = 3-methyl-2-oxobutanoate + H2O. It catalyses the reaction (2R,3R)-2,3-dihydroxy-3-methylpentanoate = (S)-3-methyl-2-oxopentanoate + H2O. The protein operates within amino-acid biosynthesis; L-isoleucine biosynthesis; L-isoleucine from 2-oxobutanoate: step 3/4. It participates in amino-acid biosynthesis; L-valine biosynthesis; L-valine from pyruvate: step 3/4. Functions in the biosynthesis of branched-chain amino acids. Catalyzes the dehydration of (2R,3R)-2,3-dihydroxy-3-methylpentanoate (2,3-dihydroxy-3-methylvalerate) into 2-oxo-3-methylpentanoate (2-oxo-3-methylvalerate) and of (2R)-2,3-dihydroxy-3-methylbutanoate (2,3-dihydroxyisovalerate) into 2-oxo-3-methylbutanoate (2-oxoisovalerate), the penultimate precursor to L-isoleucine and L-valine, respectively. This is Dihydroxy-acid dehydratase from Shewanella sp. (strain MR-7).